Here is a 617-residue protein sequence, read N- to C-terminus: 5-hydroxytryptamine receptor 2B (617 aa).

Topologically, residues 1-95 are extracellular; sequence MLKTVTTAMA…LLVKMIAMAV (95 aa). N-linked (GlcNAc...) asparagine glycans are attached at residues N31, N41, N51, and N58. A helical membrane pass occupies residues 96–116; sequence VLGLMILVTIIGNVFVIAAII. The Cytoplasmic segment spans residues 117–128; that stretch reads LERNLQNVANYL. Residues 129–149 form a helical membrane-spanning segment; it reads VASLAVADLFVACLVMPLGAV. Over 150-164 the chain is Extracellular; it reads YEISNGWILGPELCD. An intrachain disulfide couples C163 to C242. The helical transmembrane segment at 165–185 threads the bilayer; the sequence is IWTSCDVLCCTASILHLVAIA. The Cytoplasmic segment spans residues 186–205; it reads ADRYWTVTNIDYNNLRTPRR. The helical transmembrane segment at 206–226 threads the bilayer; it reads VFLMIFCVWFAALIVSLAPQF. Residues 227–256 are Extracellular-facing; that stretch reads GWKDPDYMKRIEEQHCMVSQDVGYQIFATC. The chain crosses the membrane as a helical span at residues 257-277; sequence CTFYVPLLVILFLYWKIYIIA. Residues 278-534 are Cytoplasmic-facing; sequence RKRIQRRAQK…EAKRERKAAQ (257 aa). The tract at residues 309–336 is disordered; sequence RSKRRAERKRLEAGERTPVDGDGTGGQL. Residues 317-327 are compositionally biased toward basic and acidic residues; the sequence is KRLEAGERTPV. A helical transmembrane segment spans residues 535–555; the sequence is TLAIITGAFVICWLPFFVMAL. Topologically, residues 556-570 are extracellular; sequence TMSLCKECEIHTAVA. A helical membrane pass occupies residues 571-591; it reads SLFLWLGYFNSTLNPVIYTIF. The Cytoplasmic portion of the chain corresponds to 592-617; it reads NPEFRRAFKRILFGRKAAARARSAKI.

The protein belongs to the G-protein coupled receptor 1 family.

It localises to the cell membrane. This is one of the several different receptors for 5-hydroxytryptamine (serotonin), a biogenic hormone that functions as a neurotransmitter, a hormone, and a mitogen. The activity of this receptor is mediated by G proteins which inhibit adenylate cyclase. In Drosophila melanogaster (Fruit fly), this protein is 5-hydroxytryptamine receptor 2B (5-HT1B).